Here is a 117-residue protein sequence, read N- to C-terminus: Large ribosomal subunit protein bL19 (117 aa).

This sequence belongs to the bacterial ribosomal protein bL19 family.

In terms of biological role, this protein is located at the 30S-50S ribosomal subunit interface and may play a role in the structure and function of the aminoacyl-tRNA binding site. The sequence is that of Large ribosomal subunit protein bL19 from Photorhabdus laumondii subsp. laumondii (strain DSM 15139 / CIP 105565 / TT01) (Photorhabdus luminescens subsp. laumondii).